Reading from the N-terminus, the 80-residue chain is Large ribosomal subunit protein bL31B (80 aa).

Belongs to the bacterial ribosomal protein bL31 family. Type B subfamily. In terms of assembly, part of the 50S ribosomal subunit.

The polypeptide is Large ribosomal subunit protein bL31B (Xanthomonas axonopodis pv. citri (strain 306)).